Reading from the N-terminus, the 991-residue chain is MTPALKEATTKGICFSSLPNTMESDKMLCMESPRTVDEKLKGGDTFSQMLGFPTPEPTLNTNFVNLKHFASPQASKHFQTVLLMSSNSTLNKYNENYNQKKVMESNCSKLKNVLCNGSSIQLSKICPSHSENEFIKKELSDTTSQCMKDIQIVLDSNLTKDANVDRLHLQNCKWYQKNALLDKFTDTKIKKGLLQCTQKKIGPSHSDVPTSSSAAEKEQEVNARLLHCVSKQKILLSQARRTQKHLQMLLAKHVVKHYGQQMKFSMKHQLPTMKIFHEPTTVLSNSLLEHTEIKPEVNILASENKFWDDTNNGFSQCTAAEIQRFALSATGLLSHVEEGLDSDATDSSSDDELDEYTIRKNVAVNSSTEWKWLVDRAQVGSRWTWLQAQISELEYKIQQLTDIHRQIRASKGIVILEECQLPKDILKKQIQFSNQAVSLNTSVNSQVPQRSEEPLPEHDFEMSPSSPTLLLRNIEKQSAQLTEIINSLIAPLNLSPTSSPLSSKSCSHKCLANGISRSASENLDELSSSSSWLLNQKHSKKRRKDRTRLKSPSLAIMSTAARTRPLQSFHKRKLYRLSPTFYWTPETLPSKEAFLSSTQTPYTGSPFSWDNWEQSSRSHLLREQVSKLDSSFHPVLSLPSEIPLHLHFETLFKKTDMKGELAENQFVGDCLISPPPVQGTSSLNQWRNGYSPICKPQIRSQPSVQLLQGRKKRHLSETALAGERTRFEEFAFQRSEPGSHCNFTAVSNANVTSRTQNPSSQNTSRRRLRSESSYDIDNIVIPMSLVAPAKLEKLQYKEILTPRWRKVVLQPLDEHNLNKEEIEDLSDDVFSLRHRKYEEREQARWSLWEQSKWHRRNNRAYSKNVEGQDLVLKEHSSELGSAQQGTAESPFELPAESHSLCAQDSLSLNDGQEDKSLRWERRAFPLKDEDTAALLCQDERKDQTGGTSTAFHDEVFCSTTPESGHPPKMQLDGMEEYKSFGIGVTNVKRNR.

Lys-136 participates in a covalent cross-link: Glycyl lysine isopeptide (Lys-Gly) (interchain with G-Cter in SUMO2). The disordered stretch occupies residues 443 to 462; that stretch reads VNSQVPQRSEEPLPEHDFEM. Basic and acidic residues predominate over residues 450–461; the sequence is RSEEPLPEHDFE. At Ser-463 the chain carries Phosphoserine. The segment covering 749–763 has biased composition (polar residues); the sequence is ANVTSRTQNPSSQNT. The disordered stretch occupies residues 749–770; it reads ANVTSRTQNPSSQNTSRRRLRS. The 122-residue stretch at 798 to 919 folds into the PEHE domain; it reads EILTPRWRKV…DGQEDKSLRW (122 aa). An N6-acetyllysine modification is found at Lys-863.

Post-translationally, acetylated on lysine residues by KAT8 upon ionizing radiation-induced DNA damage; deacetylated by HDAC3.

This is KAT8 regulatory NSL complex subunit 1-like protein (Kansl1l) from Mus musculus (Mouse).